The chain runs to 426 residues: Zinc finger CCCH domain-containing protein 13 (426 aa).

A C3H1-type zinc finger spans residues 10–36; it reads AYKTKLCALWQRGNCNRDTCSFAHGHG. Disordered stretches follow at residues 34 to 155, 253 to 317, and 390 to 426; these read GHGD…HEKQ, NEEG…DKTS, and NDAD…VDVE. Composition is skewed to basic and acidic residues over residues 54 to 70, 78 to 101, and 108 to 120; these read RRDY…DRRF, PGRE…RDSS, and RKSE…KTDD. Residues 124 to 133 show a composition bias toward low complexity; the sequence is NSSRSLSLSD. Residues 135–155 are compositionally biased toward basic and acidic residues; that stretch reads NDEKKKDKFSSGDEKEDHEKQ. A coiled-coil region spans residues 144 to 245; the sequence is SSGDEKEDHE…FERLGDLLAS (102 aa). Residues 255-272 are compositionally biased toward polar residues; sequence EGSSVNEDLNERSPNTAA. Over residues 284–317 the composition is skewed to basic and acidic residues; the sequence is EEAKAVKKRRERDSDTMTRSDKYRSDVTDFDKTS. The segment covering 416–426 has biased composition (acidic residues); the sequence is YEGDDEEVDVE.

The polypeptide is Zinc finger CCCH domain-containing protein 13 (Oryza sativa subsp. japonica (Rice)).